The following is a 490-amino-acid chain: Probable cytosol aminopeptidase (490 aa).

Mn(2+) is bound by residues K257 and D262. K269 is an active-site residue. Mn(2+) contacts are provided by D281, D341, and E343. Residue R345 is part of the active site.

It belongs to the peptidase M17 family. It depends on Mn(2+) as a cofactor.

Its subcellular location is the cytoplasm. The enzyme catalyses Release of an N-terminal amino acid, Xaa-|-Yaa-, in which Xaa is preferably Leu, but may be other amino acids including Pro although not Arg or Lys, and Yaa may be Pro. Amino acid amides and methyl esters are also readily hydrolyzed, but rates on arylamides are exceedingly low.. It catalyses the reaction Release of an N-terminal amino acid, preferentially leucine, but not glutamic or aspartic acids.. Presumably involved in the processing and regular turnover of intracellular proteins. Catalyzes the removal of unsubstituted N-terminal amino acids from various peptides. This Prochlorococcus marinus (strain MIT 9215) protein is Probable cytosol aminopeptidase.